The chain runs to 430 residues: RNA-binding protein 34 (430 aa).

Disordered regions lie at residues 1 to 55, 72 to 123, and 134 to 153; these read MALE…GTGR, VPVP…ADRE, and EIHQ…VKVA. 3 positions are modified to phosphoserine: S14, S28, and S99. Over residues 23–34 the composition is skewed to basic and acidic residues; it reads DGVRGSPPEDYR. Positions 113–123 are enriched in basic and acidic residues; it reads TNAEKKLADRE. At K151 the chain carries N6-acetyllysine. RRM domains are found at residues 185–280 and 287–364; these read RTVF…LASE and RSVF…RSVN. A Glycyl lysine isopeptide (Lys-Gly) (interchain with G-Cter in SUMO2) cross-link involves residue K242. S288 is subject to Phosphoserine. Disordered stretches follow at residues 365-395 and 411-430; these read KEKF…KTAE and KTKK…RKQK.

Belongs to the RRM RBM34 family.

Its subcellular location is the nucleus. The protein resides in the nucleolus. The polypeptide is RNA-binding protein 34 (RBM34) (Homo sapiens (Human)).